A 115-amino-acid chain; its full sequence is UPF0738 protein SE_0694 (115 aa).

The protein belongs to the UPF0738 family.

This is UPF0738 protein SE_0694 from Staphylococcus epidermidis (strain ATCC 12228 / FDA PCI 1200).